We begin with the raw amino-acid sequence, 135 residues long: Interleukin-5 (135 aa).

The first 19 residues, 1–19, serve as a signal peptide directing secretion; that stretch reads MRVLLQLGLLALGAVCVCA. 3 N-linked (GlcNAc...) asparagine glycosylation sites follow: Asn-48, Asn-77, and Asn-91.

Belongs to the IL-5 family. As to quaternary structure, homodimer; disulfide-linked. Interacts with IL5RA. Interacts with CSF2RB.

It is found in the secreted. In terms of biological role, homodimeric cytokine expressed predominantly by T-lymphocytes and NK cells that plays an important role in the survival, differentiation, and chemotaxis of eosinophils. Also acts on activated and resting B-cells to induce immunoglobulin production, growth, and differentiation. Mechanistically, exerts its biological effects through a receptor composed of IL5RA subunit and the cytokine receptor common subunit beta/CSF2RB. Binding to the receptor leads to activation of various kinases including LYN, SYK and JAK2 and thereby propagates signals through the RAS-MAPK and JAK-STAT5 pathways respectively. This is Interleukin-5 (IL5) from Cavia porcellus (Guinea pig).